The chain runs to 193 residues: dCTP deaminase (193 aa).

DCTP-binding positions include 110 to 115 (RSSLAR), Asp128, 136 to 138 (VLE), Tyr171, Lys178, and Gln182. The Proton donor/acceptor role is filled by Glu138.

This sequence belongs to the dCTP deaminase family. In terms of assembly, homotrimer.

It carries out the reaction dCTP + H2O + H(+) = dUTP + NH4(+). The protein operates within pyrimidine metabolism; dUMP biosynthesis; dUMP from dCTP (dUTP route): step 1/2. Its function is as follows. Catalyzes the deamination of dCTP to dUTP. The polypeptide is dCTP deaminase (Aeromonas hydrophila subsp. hydrophila (strain ATCC 7966 / DSM 30187 / BCRC 13018 / CCUG 14551 / JCM 1027 / KCTC 2358 / NCIMB 9240 / NCTC 8049)).